A 552-amino-acid polypeptide reads, in one-letter code: Serine palmitoyltransferase 3 (552 aa).

The interval 1 to 29 (MANPGGGAVCNGKLHNHKKQSNGSQSRNC) is disordered. The helical transmembrane segment at 59–79 (PLHVMVFTYMGYGIGTLFGYL) threads the bilayer. The residue at position 371 (lysine 371) is an N6-(pyridoxal phosphate)lysine.

Belongs to the class-II pyridoxal-phosphate-dependent aminotransferase family. In terms of assembly, component of the serine palmitoyltransferase (SPT) complex, which is composed of SPTLC1, SPTLC2 or SPTLC3 and SPTSSA or SPTSSB. The heterodimer consisting of SPTLC1 and SPTLC2/SPTLC3 forms the catalytic core of the enzyme, while SPTSSA or SPTSSB subunits determine substrate specificity. SPT also interacts with ORMDL proteins, especially ORMDL3, which negatively regulate SPT activity in the presence of ceramides. Pyridoxal 5'-phosphate is required as a cofactor. As to expression, expressed in most tissues, except peripheral blood cells and bone marrow, with highest levels in heart, kidney, liver, uterus and skin.

The protein resides in the endoplasmic reticulum membrane. The enzyme catalyses L-serine + hexadecanoyl-CoA + H(+) = 3-oxosphinganine + CO2 + CoA. The catalysed reaction is dodecanoyl-CoA + L-serine + H(+) = 3-oxotetradecasphinganine + CO2 + CoA. It catalyses the reaction tetradecanoyl-CoA + L-serine + H(+) = 3-oxohexadecasphinganine + CO2 + CoA. It carries out the reaction octadecanoyl-CoA + L-serine + H(+) = 3-oxoeicosasphinganine + CO2 + CoA. The protein operates within lipid metabolism; sphingolipid metabolism. SPT complex catalytic activity is negatively regulated by ORMDL proteins, including ORMDL3, in the presence of ceramides. This mechanism allows to maintain ceramide levels at sufficient concentrations for the production of complex sphingolipids, but which prevents the accumulation of ceramides to levels that trigger apoptosis. Functionally, component of the serine palmitoyltransferase multisubunit enzyme (SPT) that catalyzes the initial and rate-limiting step in sphingolipid biosynthesis by condensing L-serine and activated acyl-CoA (most commonly palmitoyl-CoA) to form long-chain bases. The SPT complex is composed of SPTLC1, SPTLC2 or SPTLC3 and SPTSSA or SPTSSB. Within this complex, the heterodimer consisting of SPTLC1 and SPTLC2/SPTLC3 forms the catalytic core. The composition of the serine palmitoyltransferase (SPT) complex determines the substrate preference. The SPTLC1-SPTLC2-SPTSSA complex shows a strong preference for C16-CoA substrate, while the SPTLC1-SPTLC3-SPTSSA isozyme uses both C14-CoA and C16-CoA as substrates, with a slight preference for C14-CoA. The SPTLC1-SPTLC2-SPTSSB complex shows a strong preference for C18-CoA substrate, while the SPTLC1-SPTLC3-SPTSSB isozyme displays an ability to use a broader range of acyl-CoAs, without apparent preference. The polypeptide is Serine palmitoyltransferase 3 (Homo sapiens (Human)).